The primary structure comprises 367 residues: Pentatricopeptide repeat-containing protein At1g11900 (367 aa).

8 PPR repeats span residues Ser-69–Leu-103, Pro-104–Pro-139, Ser-141–Tyr-175, Arg-176–Pro-210, Asp-211–Asp-241, Asn-247–Pro-281, Asp-282–Pro-316, and Ser-317–Thr-347.

The protein belongs to the PPR family. P subfamily.

This is Pentatricopeptide repeat-containing protein At1g11900 from Arabidopsis thaliana (Mouse-ear cress).